The chain runs to 290 residues: 33 kDa chaperonin (290 aa).

Intrachain disulfides connect C235-C237 and C268-C271.

It belongs to the HSP33 family. In terms of processing, under oxidizing conditions two disulfide bonds are formed involving the reactive cysteines. Under reducing conditions zinc is bound to the reactive cysteines and the protein is inactive.

The protein resides in the cytoplasm. Functionally, redox regulated molecular chaperone. Protects both thermally unfolding and oxidatively damaged proteins from irreversible aggregation. Plays an important role in the bacterial defense system toward oxidative stress. This Streptococcus pyogenes serotype M3 (strain ATCC BAA-595 / MGAS315) protein is 33 kDa chaperonin.